A 311-amino-acid polypeptide reads, in one-letter code: Putative UPF0607 protein ENSP00000382826 (311 aa).

Residues 48-61 are compositionally biased toward basic and acidic residues; the sequence is AEEPKEATEVKDQV. 3 disordered regions span residues 48–99, 186–229, and 291–311; these read AEEP…WYNP, GLLM…PLQL, and RKQL…GSCL. A compositionally biased stretch (polar residues) spans 78–97; the sequence is EAASTSRPLETQGNLTSSWY. 2 stretches are compositionally biased toward basic residues: residues 213–222 and 291–305; these read AGHRSRKRKL and RKQL…RQGR.

The protein belongs to the UPF0607 family.

This is Putative UPF0607 protein ENSP00000382826 from Homo sapiens (Human).